The following is a 254-amino-acid chain: Kallikrein-4 (254 aa).

The first 26 residues, 1-26 (MATAGNPWGWFLGYLILGVAGSLVSG), serve as a signal peptide directing secretion. The propeptide occupies 27–30 (SCSQ). The region spanning 31-252 (IINGEDCSPH…FTEWIEKTVQ (222 aa)) is the Peptidase S1 domain. Cystine bridges form between Cys37–Cys167, Cys56–Cys72, Cys141–Cys241, Cys148–Cys213, Cys178–Cys192, and Cys203–Cys228. His40 provides a ligand contact to Zn(2+). His71 serves as the catalytic Charge relay system. Glu91 is a Zn(2+) binding site. Asp116 (charge relay system) is an active-site residue. N-linked (GlcNAc...) asparagine glycosylation is present at Asn169. The active-site Charge relay system is Ser207.

This sequence belongs to the peptidase S1 family. Kallikrein subfamily. In terms of processing, N-glycosylated. The N-glycan structures are of complex diantennary or triantennary type, which may be further modified with up to 2 sialic acid residues. Expressed in prostate.

It localises to the secreted. In terms of biological role, has a major role in enamel formation. Required during the maturation stage of tooth development for clearance of enamel proteins and normal structural patterning of the crystalline matrix. The sequence is that of Kallikrein-4 (KLK4) from Homo sapiens (Human).